The primary structure comprises 338 residues: MSKPIVLSGVQPSGELSIGNYLGALRQWQQMQDDYDCQYCVVDLHAITVRQDPKALHEATLDALAICLAVGVDPKKSTLFVQSHVPEHAQLGWLLNCYTQMGELSRMTQFKDKSARYANDVNVGLFGYPVLMAADILLYGAHQVPVGSDQKQHLELARDIATRFNNIYSPENPIFTIPEPYIPTVNARVMSLQDATKKMSKSDDNRKNVITLLEDPKSIIKKINKAQTDTETPPRIAHDWDNKAGISNLMGLYSAATGMSFEEIEAKYQGVEMYGPFKKDVGEALVAMLEPIQAEYHRIREDRGYMNEVMRQGADKASARAAETLKKVYEVVGFVGRP.

Residues 11–13 (QPS) and 19–20 (GN) each bind ATP. Positions 12-20 (PSGELSIGN) match the 'HIGH' region motif. L-tryptophan is bound at residue D135. Residues 147–149 (GSD), V189, and 198–202 (KMSKS) each bind ATP. Residues 198 to 202 (KMSKS) carry the 'KMSKS' region motif.

Belongs to the class-I aminoacyl-tRNA synthetase family. In terms of assembly, homodimer.

It is found in the cytoplasm. The catalysed reaction is tRNA(Trp) + L-tryptophan + ATP = L-tryptophyl-tRNA(Trp) + AMP + diphosphate + H(+). Functionally, catalyzes the attachment of tryptophan to tRNA(Trp). The protein is Tryptophan--tRNA ligase of Vibrio vulnificus (strain YJ016).